The primary structure comprises 365 residues: MSGNTFGTLFAVTNFGESHGPAIGCVIDGCPPGMPLSEADIQTDLDRRRPGSSRHVTQRNEPDAVEILSGIYQGQTTGTPIALLIRNTDQRSKDYSRSAESFRPGHADYSYWRKYGIRDPRGGGRSSARLTAPTVAAGAVAKKWLALQYGTRFRACMTQLGELPIPFEHWDHVRNNPFFAPVADVAQYEQYIDALRKAGDSCGARIRVQATGMPVGLGEPLYDKLDADIAYALMGLNAVKGVEIGAGFASVAQRGTVHGDTMTPQGFRSNYAGGVLGGISTGQDLELSIAIKPTSSILSPSASIDIHGHSIEVSTKGRHDPCVGIRATPIAEALLALVVMDHALRHRAQCADVVLPLPPIPAAPA.

2 residues coordinate NADP(+): R48 and R54. FMN contacts are provided by residues 125–127 (RSS), 237–238 (NA), G277, 292–296 (KPTSS), and R318.

It belongs to the chorismate synthase family. In terms of assembly, homotetramer. It depends on FMNH2 as a cofactor.

It catalyses the reaction 5-O-(1-carboxyvinyl)-3-phosphoshikimate = chorismate + phosphate. Its pathway is metabolic intermediate biosynthesis; chorismate biosynthesis; chorismate from D-erythrose 4-phosphate and phosphoenolpyruvate: step 7/7. Its function is as follows. Catalyzes the anti-1,4-elimination of the C-3 phosphate and the C-6 proR hydrogen from 5-enolpyruvylshikimate-3-phosphate (EPSP) to yield chorismate, which is the branch point compound that serves as the starting substrate for the three terminal pathways of aromatic amino acid biosynthesis. This reaction introduces a second double bond into the aromatic ring system. This Verminephrobacter eiseniae (strain EF01-2) protein is Chorismate synthase.